The following is a 200-amino-acid chain: Recombination protein RecR (200 aa).

The segment at 59–74 adopts a C4-type zinc-finger fold; it reads CSTCGSLDTQDPCAIC. The Toprim domain occupies 82–177; sequence SLICVVEEVG…TVSMLARGVP (96 aa).

It belongs to the RecR family.

Functionally, may play a role in DNA repair. It seems to be involved in an RecBC-independent recombinational process of DNA repair. It may act with RecF and RecO. In Phenylobacterium zucineum (strain HLK1), this protein is Recombination protein RecR.